Here is a 242-residue protein sequence, read N- to C-terminus: uncharacterized protein (242 aa).

3 residues coordinate S-adenosyl-L-methionine: Gly-198, Ile-218, and Leu-227.

It belongs to the class IV-like SAM-binding methyltransferase superfamily. RNA methyltransferase TrmH family.

This is an uncharacterized protein from Mycoplasma pneumoniae (strain ATCC 29342 / M129 / Subtype 1) (Mycoplasmoides pneumoniae).